The following is a 192-amino-acid chain: Probable nicotinate-nucleotide adenylyltransferase (192 aa).

This sequence belongs to the NadD family.

The catalysed reaction is nicotinate beta-D-ribonucleotide + ATP + H(+) = deamido-NAD(+) + diphosphate. It functions in the pathway cofactor biosynthesis; NAD(+) biosynthesis; deamido-NAD(+) from nicotinate D-ribonucleotide: step 1/1. Catalyzes the reversible adenylation of nicotinate mononucleotide (NaMN) to nicotinic acid adenine dinucleotide (NaAD). This Rhizobium etli (strain CIAT 652) protein is Probable nicotinate-nucleotide adenylyltransferase.